A 257-amino-acid chain; its full sequence is Imidazole glycerol phosphate synthase subunit HisF (257 aa).

Active-site residues include Asp-12 and Asp-131.

The protein belongs to the HisA/HisF family. In terms of assembly, heterodimer of HisH and HisF.

It localises to the cytoplasm. The enzyme catalyses 5-[(5-phospho-1-deoxy-D-ribulos-1-ylimino)methylamino]-1-(5-phospho-beta-D-ribosyl)imidazole-4-carboxamide + L-glutamine = D-erythro-1-(imidazol-4-yl)glycerol 3-phosphate + 5-amino-1-(5-phospho-beta-D-ribosyl)imidazole-4-carboxamide + L-glutamate + H(+). It functions in the pathway amino-acid biosynthesis; L-histidine biosynthesis; L-histidine from 5-phospho-alpha-D-ribose 1-diphosphate: step 5/9. Its function is as follows. IGPS catalyzes the conversion of PRFAR and glutamine to IGP, AICAR and glutamate. The HisF subunit catalyzes the cyclization activity that produces IGP and AICAR from PRFAR using the ammonia provided by the HisH subunit. The polypeptide is Imidazole glycerol phosphate synthase subunit HisF (Burkholderia pseudomallei (strain 1106a)).